The following is a 382-amino-acid chain: tRNA(Met) cytidine acetate ligase (382 aa).

ATP contacts are provided by residues 7–20 (ITEY…HVYH), Gly-100, Asn-153, and Arg-178.

This sequence belongs to the TmcAL family.

Its subcellular location is the cytoplasm. It carries out the reaction cytidine(34) in elongator tRNA(Met) + acetate + ATP = N(4)-acetylcytidine(34) in elongator tRNA(Met) + AMP + diphosphate. Its function is as follows. Catalyzes the formation of N(4)-acetylcytidine (ac(4)C) at the wobble position of elongator tRNA(Met), using acetate and ATP as substrates. First activates an acetate ion to form acetyladenylate (Ac-AMP) and then transfers the acetyl group to tRNA to form ac(4)C34. In Staphylococcus carnosus (strain TM300), this protein is tRNA(Met) cytidine acetate ligase.